The chain runs to 204 residues: FMN-dependent NADH:quinone oxidoreductase 2 (204 aa).

FMN is bound by residues Ser-10 and 16-18 (SIS).

The protein belongs to the azoreductase type 1 family. Homodimer. It depends on FMN as a cofactor.

It carries out the reaction 2 a quinone + NADH + H(+) = 2 a 1,4-benzosemiquinone + NAD(+). It catalyses the reaction N,N-dimethyl-1,4-phenylenediamine + anthranilate + 2 NAD(+) = 2-(4-dimethylaminophenyl)diazenylbenzoate + 2 NADH + 2 H(+). Functionally, quinone reductase that provides resistance to thiol-specific stress caused by electrophilic quinones. In terms of biological role, also exhibits azoreductase activity. Catalyzes the reductive cleavage of the azo bond in aromatic azo compounds to the corresponding amines. This Jannaschia sp. (strain CCS1) protein is FMN-dependent NADH:quinone oxidoreductase 2.